A 152-amino-acid polypeptide reads, in one-letter code: Xanthine-guanine phosphoribosyltransferase (152 aa).

Residues 37 to 38, arginine 69, and 88 to 96 each bind 5-phospho-alpha-D-ribose 1-diphosphate; these read RG and DDLVDTGGT. Residue arginine 69 coordinates GMP. Aspartate 89 serves as a coordination point for Mg(2+). Residues aspartate 92 and isoleucine 135 each coordinate guanine. Xanthine contacts are provided by aspartate 92 and isoleucine 135. Residues 92 to 96 and 134 to 135 each bind GMP; these read DTGGT and WI.

This sequence belongs to the purine/pyrimidine phosphoribosyltransferase family. XGPT subfamily. As to quaternary structure, homotetramer. Mg(2+) is required as a cofactor.

The protein localises to the cell inner membrane. The catalysed reaction is GMP + diphosphate = guanine + 5-phospho-alpha-D-ribose 1-diphosphate. The enzyme catalyses XMP + diphosphate = xanthine + 5-phospho-alpha-D-ribose 1-diphosphate. It catalyses the reaction IMP + diphosphate = hypoxanthine + 5-phospho-alpha-D-ribose 1-diphosphate. It functions in the pathway purine metabolism; GMP biosynthesis via salvage pathway; GMP from guanine: step 1/1. The protein operates within purine metabolism; XMP biosynthesis via salvage pathway; XMP from xanthine: step 1/1. Purine salvage pathway enzyme that catalyzes the transfer of the ribosyl-5-phosphate group from 5-phospho-alpha-D-ribose 1-diphosphate (PRPP) to the N9 position of the 6-oxopurines guanine and xanthine to form the corresponding ribonucleotides GMP (guanosine 5'-monophosphate) and XMP (xanthosine 5'-monophosphate), with the release of PPi. To a lesser extent, also acts on hypoxanthine. The chain is Xanthine-guanine phosphoribosyltransferase from Escherichia coli O127:H6 (strain E2348/69 / EPEC).